The sequence spans 378 residues: tRNA-specific 2-thiouridylase MnmA (378 aa).

Residues 14–21 (AMSGGVDS) and leucine 40 contribute to the ATP site. Cysteine 109 acts as the Nucleophile in catalysis. A disulfide bridge connects residues cysteine 109 and cysteine 208. Glycine 133 contacts ATP. The segment at 156–158 (KDQ) is interaction with tRNA. The Cysteine persulfide intermediate role is filled by cysteine 208.

The protein belongs to the MnmA/TRMU family.

It is found in the cytoplasm. It catalyses the reaction S-sulfanyl-L-cysteinyl-[protein] + uridine(34) in tRNA + AH2 + ATP = 2-thiouridine(34) in tRNA + L-cysteinyl-[protein] + A + AMP + diphosphate + H(+). Functionally, catalyzes the 2-thiolation of uridine at the wobble position (U34) of tRNA, leading to the formation of s(2)U34. The protein is tRNA-specific 2-thiouridylase MnmA of Streptomyces griseus subsp. griseus (strain JCM 4626 / CBS 651.72 / NBRC 13350 / KCC S-0626 / ISP 5235).